The primary structure comprises 351 residues: Columbamine O-methyltransferase (351 aa).

Residues Gly198, Asp221, Asp241, Met242, and Lys255 each contribute to the S-adenosyl-L-methionine site. His259 serves as the catalytic Proton acceptor.

It belongs to the class I-like SAM-binding methyltransferase superfamily. Cation-independent O-methyltransferase family. COMT subfamily. Homodimer.

The enzyme catalyses columbamine + S-adenosyl-L-methionine = palmatine + S-adenosyl-L-homocysteine + H(+). The catalysed reaction is (S)-tetrahydrocolumbamine + S-adenosyl-L-methionine = (S)-tetrahydropalmatine + S-adenosyl-L-homocysteine + H(+). Its pathway is alkaloid biosynthesis; palmatine biosynthesis; palmatine from columbamine: step 1/1. Functionally, catalyzes the conversion of tetrahydrocolumbamine to (S)-tetrahydropalmatine and of columbamine to palmatine, an isoquinoline alkaloid. The polypeptide is Columbamine O-methyltransferase (Coptis japonica (Japanese goldthread)).